Here is a 453-residue protein sequence, read N- to C-terminus: Pup--protein ligase (453 aa).

Glu9 contributes to the Mg(2+) binding site. Arg53 provides a ligand contact to ATP. Residue Tyr55 coordinates Mg(2+). Asp57 (proton acceptor) is an active-site residue. Glu63 serves as a coordination point for Mg(2+). ATP contacts are provided by Thr66 and Trp420.

It belongs to the Pup ligase/Pup deamidase family. Pup-conjugating enzyme subfamily.

The enzyme catalyses ATP + [prokaryotic ubiquitin-like protein]-L-glutamate + [protein]-L-lysine = ADP + phosphate + N(6)-([prokaryotic ubiquitin-like protein]-gamma-L-glutamyl)-[protein]-L-lysine.. The protein operates within protein degradation; proteasomal Pup-dependent pathway. It participates in protein modification; protein pupylation. Its function is as follows. Catalyzes the covalent attachment of the prokaryotic ubiquitin-like protein modifier Pup to the proteasomal substrate proteins, thereby targeting them for proteasomal degradation. This tagging system is termed pupylation. The ligation reaction involves the side-chain carboxylate of the C-terminal glutamate of Pup and the side-chain amino group of a substrate lysine. The sequence is that of Pup--protein ligase from Streptomyces avermitilis (strain ATCC 31267 / DSM 46492 / JCM 5070 / NBRC 14893 / NCIMB 12804 / NRRL 8165 / MA-4680).